The sequence spans 161 residues: MTGAVCPGSFDPVTLGHLDVFERAAAQFDEVIVAVLINPNKAGMFTVDERIEMIRESTADLPNLRVESGQGLLVDFVRERGLNAIVKGLRTGTDFEYELQMAQMNKHIAGVDTFFVATAPAYSFVSSSLAKEVATYGGDVSALLPASVHQRLLGKLRGQAQ.

Residue Ser9 participates in substrate binding. ATP-binding positions include 9–10 (SF) and His17. Substrate contacts are provided by Lys41, Leu73, and Lys87. ATP contacts are provided by residues 88–90 (GLR), Glu98, and 122–128 (YSFVSSS).

The protein belongs to the bacterial CoaD family. As to quaternary structure, homohexamer. Mg(2+) is required as a cofactor.

The protein localises to the cytoplasm. It carries out the reaction (R)-4'-phosphopantetheine + ATP + H(+) = 3'-dephospho-CoA + diphosphate. It participates in cofactor biosynthesis; coenzyme A biosynthesis; CoA from (R)-pantothenate: step 4/5. In terms of biological role, reversibly transfers an adenylyl group from ATP to 4'-phosphopantetheine, yielding dephospho-CoA (dPCoA) and pyrophosphate. In Mycobacteroides abscessus (strain ATCC 19977 / DSM 44196 / CCUG 20993 / CIP 104536 / JCM 13569 / NCTC 13031 / TMC 1543 / L948) (Mycobacterium abscessus), this protein is Phosphopantetheine adenylyltransferase.